The following is a 309-amino-acid chain: Malate dehydrogenase (309 aa).

NAD(+) is bound by residues 9-14 (GAGFVG) and Asp-33. Positions 82 and 88 each coordinate substrate. NAD(+) contacts are provided by residues Asn-95 and 118-120 (VNN). Substrate-binding residues include Asn-120 and Arg-151. The active-site Proton acceptor is the His-175.

Belongs to the LDH/MDH superfamily. MDH type 3 family.

It catalyses the reaction (S)-malate + NAD(+) = oxaloacetate + NADH + H(+). Its function is as follows. Catalyzes the reversible oxidation of malate to oxaloacetate. The chain is Malate dehydrogenase from Roseiflexus castenholzii (strain DSM 13941 / HLO8).